Here is a 177-residue protein sequence, read N- to C-terminus: Gamma-crystallin M1-2 (177 aa).

2 consecutive Beta/gamma crystallin 'Greek key' domains span residues 2-40 (GKII…RVEN) and 41-83 (GCWM…RLLS). A connecting peptide region spans residues 84–90 (QNLGIGT). Beta/gamma crystallin 'Greek key' domains lie at 91 to 131 (NKLR…NVLD) and 132 to 174 (GYWI…RRVI).

Belongs to the beta/gamma-crystallin family. Monomer.

Its function is as follows. Crystallins are the dominant structural components of the vertebrate eye lens. The polypeptide is Gamma-crystallin M1-2 (Aquarana catesbeiana (American bullfrog)).